The chain runs to 106 residues: Small ribosomal subunit protein uS10 (106 aa).

Belongs to the universal ribosomal protein uS10 family. In terms of assembly, part of the 30S ribosomal subunit.

Functionally, involved in the binding of tRNA to the ribosomes. The chain is Small ribosomal subunit protein uS10 from Wolbachia sp. subsp. Drosophila simulans (strain wRi).